We begin with the raw amino-acid sequence, 709 residues long: MLNPIVRKFQYGQHTVAIETGMMARQATAAVMVNMDDTAVFVTVVGQKKVKEGQDFFPLTVNYQERTYAAGRVPGSFFRREGRPGEGETLVARLIDRPLRPLFPDGFLNEVQIVATVVSVNPQVNPDIVAMIGASAVLALSGIPFNGPIGAARVGYINDQYVLNPTSDELKNSRLDLVVSGTAGAVLMVESEADILTEEQMLGAVVFGHEQQQVVIDNINALAAEAGKEKWNWVPESVNQALHDRVAGLAEDRLGDAYRITEKQERYAQVDAIKEEVTAALLEQDEALEEAEIHEILGSLEKKVVRSRVLRGEPRIDGREKDMVRALDVRTGVLPRTHGSALFTRGETQALVTATLGTERDAQIIDELMGERTDRFLLHYNFPPYSVGETGMMGSPKRREIGHGRLAKRGVAAVMPKANEFPYTVRVVSEITESNGSSSMASVCGASLALMDAGVPIKAAVAGIAMGLVKEDDNFVVLSDILGDEDHLGDMDFKVAGSCEGISALQMDIKIEGITREIMQIALNQAKGARLHILSVMEQAINSPRNDISEFAPRIHTIKINPDKIKDVIGKGGSVIRALTEETGTTIEIEDDGTVKIAATDGEKAKHAISRIEEITAEIEVARIYTGKVTRIVDFGAFVAIGGGKEGLVHISQIADKRVEKVADYLQVGQEVSVKVLEIDRQGRVRLSIKEATVGVIVEDTPVAPQSAE.

Residues aspartate 486 and aspartate 492 each contribute to the Mg(2+) site. In terms of domain architecture, KH spans 553 to 612 (PRIHTIKINPDKIKDVIGKGGSVIRALTEETGTTIEIEDDGTVKIAATDGEKAKHAISRI). The S1 motif domain maps to 622–690 (ARIYTGKVTR…RQGRVRLSIK (69 aa)).

This sequence belongs to the polyribonucleotide nucleotidyltransferase family. As to quaternary structure, component of the RNA degradosome, which is a multiprotein complex involved in RNA processing and mRNA degradation. Mg(2+) serves as cofactor.

It localises to the cytoplasm. The enzyme catalyses RNA(n+1) + phosphate = RNA(n) + a ribonucleoside 5'-diphosphate. Functionally, involved in mRNA degradation. Catalyzes the phosphorolysis of single-stranded polyribonucleotides processively in the 3'- to 5'-direction. The protein is Polyribonucleotide nucleotidyltransferase of Photorhabdus laumondii subsp. laumondii (strain DSM 15139 / CIP 105565 / TT01) (Photorhabdus luminescens subsp. laumondii).